Reading from the N-terminus, the 165-residue chain is NADPH-dependent 7-cyano-7-deazaguanine reductase (165 aa).

The Thioimide intermediate role is filled by Cys-56. The Proton donor role is filled by Asp-63. Substrate is bound by residues 78–80 (VES) and 97–98 (HE).

Belongs to the GTP cyclohydrolase I family. QueF type 1 subfamily.

It localises to the cytoplasm. It carries out the reaction 7-aminomethyl-7-carbaguanine + 2 NADP(+) = 7-cyano-7-deazaguanine + 2 NADPH + 3 H(+). It functions in the pathway tRNA modification; tRNA-queuosine biosynthesis. Functionally, catalyzes the NADPH-dependent reduction of 7-cyano-7-deazaguanine (preQ0) to 7-aminomethyl-7-deazaguanine (preQ1). The polypeptide is NADPH-dependent 7-cyano-7-deazaguanine reductase (Bacillus cytotoxicus (strain DSM 22905 / CIP 110041 / 391-98 / NVH 391-98)).